The sequence spans 918 residues: Interleukin-6 receptor subunit beta (918 aa).

The first 22 residues, 1 to 22, serve as a signal peptide directing secretion; the sequence is MLTLQTWLVQALFIFLTTESTG. Residues 23-619 lie on the Extracellular side of the membrane; sequence ELLDPCGYIS…TPKFAQGEIE (597 aa). In terms of domain architecture, Ig-like C2-type spans 26 to 120; sequence DPCGYISPES…LEQNVYGITI (95 aa). Intrachain disulfides connect Cys28–Cys54 and Cys48–Cys103. Residues Asn43, Asn83, and Asn131 are each glycosylated (N-linked (GlcNAc...) asparagine). 5 consecutive Fibronectin type-III domains span residues 125 to 216, 224 to 324, 329 to 424, 426 to 517, and 518 to 613; these read PPEK…NFDP, PPHN…TYED, APSF…FQAT, PVMD…LKQA, and PPSK…TPKF. A disulfide bridge connects residues Cys134 and Cys144. Asn157 is a glycosylation site (N-linked (GlcNAc...) asparagine). Cys172 and Cys182 are oxidised to a cystine. An N-linked (GlcNAc...) asparagine glycan is attached at Asn227. The short motif at 310–314 is the WSXWS motif element; it reads WSDWS. Asn379 and Asn383 each carry an N-linked (GlcNAc...) asparagine glycan. A glycan (N-linked (GlcNAc...) (complex) asparagine) is linked at Asn390. Cys458 and Cys466 are joined by a disulfide. Residues Asn553 and Asn564 are each glycosylated (N-linked (GlcNAc...) asparagine). Residues 620-641 form a helical membrane-spanning segment; sequence AIVVPVCLAFLLTTLLGVLFCF. Topologically, residues 642–918 are cytoplasmic; the sequence is NKRDLIKKHI…TVRQGGYMPQ (277 aa). Positions 651-659 match the Box 1 motif motif; the sequence is IWPNVPDPS. Disordered stretches follow at residues 660–681 and 722–758; these read KSHI…SKDQ and EGHS…STVQ. Residues Ser661 and Ser667 each carry the phosphoserine modification. Residues 731–755 are compositionally biased toward low complexity; that stretch reads SSCMSSSRPSISSSDENESSQNTSS. Phosphoserine occurs at positions 782, 789, 829, and 839.

This sequence belongs to the type I cytokine receptor family. Type 2 subfamily. As to quaternary structure, component of a hexamer of two molecules each of IL6, IL6R and IL6ST; associates with the complex IL6:IL6R but does not interact with IL6. Forms heterodimers composed of LIFR and IL6ST (type I OSM receptor) which are activated by LIF and OSM. Also forms heterodimers composed of OSMR and IL6ST (type II receptor) which are activated by OSM but not by LIF. Component of a receptor complex composed of IL6ST/GP130, IL27RA/WSX1 and CNTFR which interacts with the neuroprotective peptide humanin. Interacts with HCK. Interacts with INPP5D/SHIP1. Interacts with SRC and YES. Interacts with ARMH4; this interaction prevents IL6ST protein homodimerization and bridges ARMH4 with IL6R and STAT3 and therefore inhibits phosphorylation of STAT3 at 'Tyr-705'. In terms of assembly, (Microbial infection) The homodimer binds two molecules of herpes virus 8/HHV-8 protein vIL-6. Phosphorylation of Ser-782 down-regulates cell surface expression. In terms of processing, heavily N-glycosylated. Glycosylation is required for protein stability and localization in plasma membrane but not for ligand binding. In terms of tissue distribution, found in all the tissues and cell lines examined. Expression not restricted to IL6 responsive cells. As to expression, expressed in blood serum (at protein level).

The protein localises to the cell membrane. It localises to the secreted. In terms of biological role, signal-transducing molecule. The receptor systems for IL6, LIF, OSM, CNTF, IL11, CTF1 and BSF3 can utilize IL6ST for initiating signal transmission. Binding of IL6 to IL6R induces IL6ST homodimerization and formation of a high-affinity receptor complex, which activates the intracellular JAK-MAPK and JAK-STAT3 signaling pathways. That causes phosphorylation of IL6ST tyrosine residues which in turn activates STAT3. In parallel, the IL6 signaling pathway induces the expression of two cytokine receptor signaling inhibitors, SOCS1 and SOCS3, which inhibit JAK and terminate the activity of the IL6 signaling pathway as a negative feedback loop. Also activates the yes-associated protein 1 (YAP) and NOTCH pathways to control inflammation-induced epithelial regeneration, independently of STAT3. Acts as a receptor for the neuroprotective peptide humanin as part of a complex with IL27RA/WSX1 and CNTFR. Mediates signals which regulate immune response, hematopoiesis, pain control and bone metabolism. Has a role in embryonic development. Essential for survival of motor and sensory neurons and for differentiation of astrocytes. Required for expression of TRPA1 in nociceptive neurons. Required for the maintenance of PTH1R expression in the osteoblast lineage and for the stimulation of PTH-induced osteoblast differentiation. Required for normal trabecular bone mass and cortical bone composition. Functionally, binds to the soluble IL6:sIL6R complex (hyper-IL6), thereby blocking IL6 trans-signaling. Inhibits sIL6R-dependent acute phase response. Also blocks IL11 cluster signaling through IL11R. The sequence is that of Interleukin-6 receptor subunit beta from Homo sapiens (Human).